Consider the following 97-residue polypeptide: U-scoloptoxin(10)-Sa2a (97 aa).

Residues 1 to 23 form the signal peptide; it reads MNKSMLIFFTILFLTYIIEEKEA.

It belongs to the scoloptoxin-10 family. Contains 3 disulfide bonds. In terms of tissue distribution, expressed by the venom gland.

Its subcellular location is the secreted. The sequence is that of U-scoloptoxin(10)-Sa2a from Scolopendra alternans (Florida Keys giant centipede).